The following is a 373-amino-acid chain: tRNA-specific 2-thiouridylase MnmA (373 aa).

ATP-binding positions include 12-19 (GMSGGVDS) and methionine 38. The interaction with target base in tRNA stretch occupies residues 98–100 (NPD). Catalysis depends on cysteine 103, which acts as the Nucleophile. A disulfide bridge connects residues cysteine 103 and cysteine 200. Glycine 127 is a binding site for ATP. Residues 150-152 (KDQ) form an interaction with tRNA region. The active-site Cysteine persulfide intermediate is cysteine 200. The interaction with tRNA stretch occupies residues 312 to 313 (RY).

Belongs to the MnmA/TRMU family.

The protein resides in the cytoplasm. It carries out the reaction S-sulfanyl-L-cysteinyl-[protein] + uridine(34) in tRNA + AH2 + ATP = 2-thiouridine(34) in tRNA + L-cysteinyl-[protein] + A + AMP + diphosphate + H(+). Its function is as follows. Catalyzes the 2-thiolation of uridine at the wobble position (U34) of tRNA, leading to the formation of s(2)U34. This is tRNA-specific 2-thiouridylase MnmA from Streptococcus pyogenes serotype M49 (strain NZ131).